The chain runs to 299 residues: Aspartate carbamoyltransferase catalytic subunit (299 aa).

2 residues coordinate carbamoyl phosphate: arginine 51 and threonine 52. Lysine 80 is an L-aspartate binding site. 3 residues coordinate carbamoyl phosphate: arginine 101, histidine 129, and glutamine 132. The L-aspartate site is built by arginine 162 and arginine 221. 2 residues coordinate carbamoyl phosphate: leucine 260 and proline 261.

The protein belongs to the aspartate/ornithine carbamoyltransferase superfamily. ATCase family. As to quaternary structure, heterooligomer of catalytic and regulatory chains.

The catalysed reaction is carbamoyl phosphate + L-aspartate = N-carbamoyl-L-aspartate + phosphate + H(+). Its pathway is pyrimidine metabolism; UMP biosynthesis via de novo pathway; (S)-dihydroorotate from bicarbonate: step 2/3. Catalyzes the condensation of carbamoyl phosphate and aspartate to form carbamoyl aspartate and inorganic phosphate, the committed step in the de novo pyrimidine nucleotide biosynthesis pathway. This Sulfolobus acidocaldarius (strain ATCC 33909 / DSM 639 / JCM 8929 / NBRC 15157 / NCIMB 11770) protein is Aspartate carbamoyltransferase catalytic subunit.